The primary structure comprises 378 residues: Chaperone protein DnaJ (378 aa).

The 66-residue stretch at 5 to 70 (DYYEVLSVGR…DKKAAYDQFG (66 aa)) folds into the J domain. The segment at 133–211 (GLTKELRIPT…CHGEGRVEKS (79 aa)) adopts a CR-type zinc-finger fold. Zn(2+)-binding residues include C146, C149, C163, C166, C185, C188, C199, and C202. CXXCXGXG motif repeat units lie at residues 146 to 153 (CDTCDGSG), 163 to 170 (CGTCHGQG), 185 to 192 (CPTCHGRG), and 199 to 206 (CNSCHGEG).

It belongs to the DnaJ family. In terms of assembly, homodimer. Zn(2+) is required as a cofactor.

The protein localises to the cytoplasm. In terms of biological role, participates actively in the response to hyperosmotic and heat shock by preventing the aggregation of stress-denatured proteins and by disaggregating proteins, also in an autonomous, DnaK-independent fashion. Unfolded proteins bind initially to DnaJ; upon interaction with the DnaJ-bound protein, DnaK hydrolyzes its bound ATP, resulting in the formation of a stable complex. GrpE releases ADP from DnaK; ATP binding to DnaK triggers the release of the substrate protein, thus completing the reaction cycle. Several rounds of ATP-dependent interactions between DnaJ, DnaK and GrpE are required for fully efficient folding. Also involved, together with DnaK and GrpE, in the DNA replication of plasmids through activation of initiation proteins. The sequence is that of Chaperone protein DnaJ from Shewanella woodyi (strain ATCC 51908 / MS32).